Here is a 65-residue protein sequence, read N- to C-terminus: KDGYPVIKTTGCKLICVGISDNKSCDRFCKKQGGSHGYCHAFGCWCEGLSGSTPTYPIPGKTCKK.

In terms of domain architecture, LCN-type CS-alpha/beta spans 1 to 64; the sequence is KDGYPVIKTT…TYPIPGKTCK (64 aa). Cystine bridges form between cysteine 12–cysteine 63, cysteine 16–cysteine 39, cysteine 25–cysteine 44, and cysteine 29–cysteine 46.

Belongs to the long (4 C-C) scorpion toxin superfamily. Sodium channel inhibitor family. In terms of tissue distribution, expressed by the venom gland.

The protein resides in the secreted. Its function is as follows. Probable sodium channel inhibitor. The polypeptide is Toxin NaTx-22 (Centruroides sculpturatus (Arizona bark scorpion)).